We begin with the raw amino-acid sequence, 334 residues long: Beta-glucanase (334 aa).

Residues 1–27 (MKNRVISLLMASLLLVLSVIVAPFYKA) form the signal peptide. One can recognise a GH16 domain in the interval 28-248 (EAATVVNTPF…YVKYYPNGVP (221 aa)). E136 functions as the Nucleophile in the catalytic mechanism. Residue E140 is the Proton donor of the active site. The Dockerin domain maps to 267 to 334 (NLPLKGDVNG…RYLIRAIPSL (68 aa)).

Belongs to the glycosyl hydrolase 16 family. As to quaternary structure, may form part of a multienzyme complex (cellulosome).

The catalysed reaction is Hydrolysis of (1-&gt;4)-beta-D-glucosidic linkages in beta-D-glucans containing (1-&gt;3)- and (1-&gt;4)-bonds.. The chain is Beta-glucanase (licB) from Acetivibrio thermocellus (strain ATCC 27405 / DSM 1237 / JCM 9322 / NBRC 103400 / NCIMB 10682 / NRRL B-4536 / VPI 7372) (Clostridium thermocellum).